The following is a 193-amino-acid chain: Probable nicotinate-nucleotide adenylyltransferase (193 aa).

It belongs to the NadD family.

It carries out the reaction nicotinate beta-D-ribonucleotide + ATP + H(+) = deamido-NAD(+) + diphosphate. It functions in the pathway cofactor biosynthesis; NAD(+) biosynthesis; deamido-NAD(+) from nicotinate D-ribonucleotide: step 1/1. Its function is as follows. Catalyzes the reversible adenylation of nicotinate mononucleotide (NaMN) to nicotinic acid adenine dinucleotide (NaAD). The polypeptide is Probable nicotinate-nucleotide adenylyltransferase (Flavobacterium psychrophilum (strain ATCC 49511 / DSM 21280 / CIP 103535 / JIP02/86)).